A 201-amino-acid chain; its full sequence is UPF0301 protein Atu0781 (201 aa).

This sequence belongs to the UPF0301 (AlgH) family.

This chain is UPF0301 protein Atu0781, found in Agrobacterium fabrum (strain C58 / ATCC 33970) (Agrobacterium tumefaciens (strain C58)).